Consider the following 444-residue polypeptide: Putative F-box protein At1g64540 (444 aa).

Positions 4-50 (REFISNLPDEILGKILSLLPTKLGVSTSVLSKRWRNLILLVDNFDLE) constitute an F-box domain.

The protein is Putative F-box protein At1g64540 of Arabidopsis thaliana (Mouse-ear cress).